A 290-amino-acid chain; its full sequence is Sodium/potassium-transporting ATPase subunit beta-2 (290 aa).

Residues 1–39 lie on the Cytoplasmic side of the membrane; that stretch reads MVIQKEKKSCGQVVEEWKEFVWNPRTHQFMGRTGTSWAF. The helical; Signal-anchor for type II membrane protein transmembrane segment at 40–67 threads the bilayer; the sequence is ILLFYLVFYGFLTAMFSLTMWVMLQTVS. Over 68–290 the chain is Extracellular; it reads DHTPKYQDRL…VAFKLRINKT (223 aa). 2 N-linked (GlcNAc...) asparagine glycosylation sites follow: asparagine 96 and asparagine 118. An intrachain disulfide couples cysteine 129 to cysteine 150. N-linked (GlcNAc...) asparagine glycosylation is present at asparagine 153. Cysteine 160 and cysteine 177 are oxidised to a cystine. Residues asparagine 193, asparagine 197, asparagine 220, and asparagine 238 are each glycosylated (N-linked (GlcNAc...) asparagine). The segment at 193–290 is immunoglobulin-like; the sequence is NQSMNVTCVG…VAFKLRINKT (98 aa). Cysteine 200 and cysteine 261 form a disulfide bridge.

This sequence belongs to the X(+)/potassium ATPases subunit beta family. The sodium/potassium-transporting ATPase is composed of a catalytic alpha subunit, an auxiliary non-catalytic beta subunit and an additional regulatory subunit. Interacts with isoform 2 of BSG.

The protein localises to the cell membrane. This is the non-catalytic component of the active enzyme, which catalyzes the hydrolysis of ATP coupled with the exchange of Na(+) and K(+) ions across the plasma membrane. The exact function of the beta-2 subunit is not known. In terms of biological role, mediates cell adhesion of neurons and astrocytes, and promotes neurite outgrowth. In Mus musculus (Mouse), this protein is Sodium/potassium-transporting ATPase subunit beta-2 (Atp1b2).